We begin with the raw amino-acid sequence, 253 residues long: Phosphate import ATP-binding protein PstB (253 aa).

The 241-residue stretch at 8–248 folds into the ABC transporter domain; sequence IQVRDLDLFY…PRDKRTEDYI (241 aa). 40-47 lines the ATP pocket; it reads GPSGCGKS.

This sequence belongs to the ABC transporter superfamily. Phosphate importer (TC 3.A.1.7) family. The complex is composed of two ATP-binding proteins (PstB), two transmembrane proteins (PstC and PstA) and a solute-binding protein (PstS).

The protein localises to the cell membrane. The enzyme catalyses phosphate(out) + ATP + H2O = ADP + 2 phosphate(in) + H(+). Functionally, part of the ABC transporter complex PstSACB involved in phosphate import. Responsible for energy coupling to the transport system. This is Phosphate import ATP-binding protein PstB from Clostridium perfringens (strain ATCC 13124 / DSM 756 / JCM 1290 / NCIMB 6125 / NCTC 8237 / Type A).